Consider the following 443-residue polypeptide: KASVGFKAGVKDYRLTYYTPEYQTKDTDILAAFRVTPQPGVPPEEAGAAVAAESSTGTWTTVWTDGLTSLDRYKGRCYDIEPVAGEESQFIAYVAYPLDLFEEGSVTNLFTSIVGNVFGFKALRALRLEDLRIPPAYSKTFQGPPHGIQVERDKLNKYGRPLLGCTIKPKLGLSAKNYGRAVYECLRGGLDFTKDDENVNSQPFMRWRDRFVFCAEAINKAQAETGEIKGHYLNATAGTCEEMMKRAIFARELGVPIVMHDYLTGGFTANTSLAHYCRDNGLLLHIHRAMHAVIDRQRNHGMHFRVLAKALRMSGGDHVHAGTVVGKLEGERDVTLGFVDLLRDDFIEKDRSRGIYFTQDWVSMPGVLPVASGGIHVWHMPALTEIFGDDSVLQFGGGTLGHPWGNAPGAVANRVAVEACVQARNEGRDLAREGNEVIREACK.

Position 7 is an N6,N6,N6-trimethyllysine (Lys7). Residues Asn116 and Thr166 each contribute to the substrate site. The Proton acceptor role is filled by Lys168. Substrate is bound at residue Lys170. 3 residues coordinate Mg(2+): Lys194, Asp196, and Glu197. Lys194 is subject to N6-carboxylysine. His287 serves as the catalytic Proton acceptor. Residues Arg288, His320, and Ser372 each coordinate substrate.

It belongs to the RuBisCO large chain family. Type I subfamily. As to quaternary structure, heterohexadecamer of 8 large chains and 8 small chains; disulfide-linked. The disulfide link is formed within the large subunit homodimers. Mg(2+) serves as cofactor. The disulfide bond which can form in the large chain dimeric partners within the hexadecamer appears to be associated with oxidative stress and protein turnover.

It localises to the plastid. It is found in the chloroplast. It carries out the reaction 2 (2R)-3-phosphoglycerate + 2 H(+) = D-ribulose 1,5-bisphosphate + CO2 + H2O. The enzyme catalyses D-ribulose 1,5-bisphosphate + O2 = 2-phosphoglycolate + (2R)-3-phosphoglycerate + 2 H(+). Its function is as follows. RuBisCO catalyzes two reactions: the carboxylation of D-ribulose 1,5-bisphosphate, the primary event in carbon dioxide fixation, as well as the oxidative fragmentation of the pentose substrate in the photorespiration process. Both reactions occur simultaneously and in competition at the same active site. The protein is Ribulose bisphosphate carboxylase large chain of Abies sachalinensis (Sakhalin fir).